A 364-amino-acid polypeptide reads, in one-letter code: MAFDDKMKPVNGQPDQKSCGKKPKGLHLLSSTWWCPAAVTLAILCLVLSVTLIVQQTQLLQVSDLLKQYQANLTQQDHILEGQMSAQKKAENASQESKRELKEQIDTLTWKLNEKSKEQEKLLQQNQNLQEALQRAVNASEESKWELKEQIDILNWKLNGISKEQKELLQQNQNLQEALQKAEKYSEESQRELKEQIDTLSWKLNEKSKEQEELLQQNQNLQEALQRAANSSGPCPQDWIWHKENCYLFHGPFNWEKSRENCLSLDAQLLQISTTDDLNFVLQATSHSTSPFWMGLHRKNPNHPWLWENGSPLSFQFFRTRGVSLQMYSSGTCAYIQGGVVFAENCILTAFSICQKKANLLLTQ.

The disordered stretch occupies residues 1-21 (MAFDDKMKPVNGQPDQKSCGK). At 1–31 (MAFDDKMKPVNGQPDQKSCGKKPKGLHLLSS) the chain is on the cytoplasmic side. The chain crosses the membrane as a helical; Signal-anchor for type II membrane protein span at residues 32-54 (TWWCPAAVTLAILCLVLSVTLIV). 2 S-palmitoyl cysteine lipidation sites follow: cysteine 35 and cysteine 45. The neck stretch occupies residues 55-242 (QQTQLLQVSD…GPCPQDWIWH (188 aa)). Topologically, residues 55–364 (QQTQLLQVSD…QKKANLLLTQ (310 aa)) are extracellular. Asparagine 72, asparagine 92, and asparagine 138 each carry an N-linked (GlcNAc...) asparagine glycan. Residues 83–233 (QMSAQKKAEN…ALQRAANSSG (151 aa)) adopt a coiled-coil conformation. Tandem repeats lie at residues 96 to 141 (ESKR…NASE), 142 to 187 (ESKW…KYSE), and 188 to 233 (ESQR…NSSG). Intrachain disulfides connect cysteine 235-cysteine 246, cysteine 262-cysteine 354, and cysteine 333-cysteine 346. Residues 242–355 (HKENCYLFHG…CILTAFSICQ (114 aa)) form the C-type lectin domain.

Homodimer; disulfide-linked. May form a hexamer composed of 3 homodimers. Interacts with HSP70. N-glycosylated. In terms of tissue distribution, predominantly expressed in lung and at lower level in kidney. Expressed in macrophages but not in vascular smooth muscle cells.

It localises to the cell membrane. The protein resides in the membrane raft. The protein localises to the secreted. In terms of biological role, receptor that mediates the recognition, internalization and degradation of oxidatively modified low density lipoprotein (oxLDL) by vascular endothelial cells. OxLDL is a marker of atherosclerosis that induces vascular endothelial cell activation and dysfunction, resulting in pro-inflammatory responses, pro-oxidative conditions and apoptosis. Its association with oxLDL induces the activation of NF-kappa-B through an increased production of intracellular reactive oxygen and a variety of pro-atherogenic cellular responses including a reduction of nitric oxide (NO) release, monocyte adhesion and apoptosis. In addition to binding oxLDL, it acts as a receptor for the HSP70 protein involved in antigen cross-presentation to naive T-cells in dendritic cells, thereby participating in cell-mediated antigen cross-presentation. Also involved in inflammatory process, by acting as a leukocyte-adhesion molecule at the vascular interface in endotoxin-induced inflammation. Also acts as a receptor for advanced glycation end (AGE) products, activated platelets, monocytes, apoptotic cells and both Gram-negative and Gram-positive bacteria. The sequence is that of Oxidized low-density lipoprotein receptor 1 (Olr1) from Rattus norvegicus (Rat).